We begin with the raw amino-acid sequence, 200 residues long: Recombination protein RecR (200 aa).

The C4-type zinc-finger motif lies at 59-74; sequence CSVCGSLDTSDPCAIC. Residues 82-177 form the Toprim domain; sequence RLLCVVEEVG…SVTMLARGVP (96 aa).

This sequence belongs to the RecR family.

In terms of biological role, may play a role in DNA repair. It seems to be involved in an RecBC-independent recombinational process of DNA repair. It may act with RecF and RecO. The sequence is that of Recombination protein RecR from Caulobacter sp. (strain K31).